The sequence spans 208 residues: Large ribosomal subunit protein uL3 (208 aa).

Residues 134–159 (SKFHREAGSTGHCTTPGRSFKNTTMP) are disordered. Polar residues predominate over residues 144 to 158 (GHCTTPGRSFKNTTM).

Belongs to the universal ribosomal protein uL3 family. As to quaternary structure, part of the 50S ribosomal subunit. Forms a cluster with proteins L14 and L19.

Functionally, one of the primary rRNA binding proteins, it binds directly near the 3'-end of the 23S rRNA, where it nucleates assembly of the 50S subunit. The chain is Large ribosomal subunit protein uL3 from Treponema denticola (strain ATCC 35405 / DSM 14222 / CIP 103919 / JCM 8153 / KCTC 15104).